A 414-amino-acid chain; its full sequence is Na(+)-translocating NADH-quinone reductase subunit B (414 aa).

A run of 4 helical transmembrane segments spans residues 56 to 76 (IMIM…YNVG), 82 to 104 (ALNH…HYWL), 129 to 149 (FLPI…LFCM), and 164 to 184 (ILFA…LGIT). Threonine 236 is subject to FMN phosphoryl threonine. A run of 5 helical transmembrane segments spans residues 275–295 (VSTL…IASW), 297–317 (IIAG…VIGS), 325–345 (MPWH…FMAT), 358–378 (WAYG…NPAY), and 381–401 (GMML…HIVI).

It belongs to the NqrB/RnfD family. In terms of assembly, composed of six subunits; NqrA, NqrB, NqrC, NqrD, NqrE and NqrF. FMN serves as cofactor.

It is found in the cell inner membrane. The enzyme catalyses a ubiquinone + n Na(+)(in) + NADH + H(+) = a ubiquinol + n Na(+)(out) + NAD(+). NQR complex catalyzes the reduction of ubiquinone-1 to ubiquinol by two successive reactions, coupled with the transport of Na(+) ions from the cytoplasm to the periplasm. NqrA to NqrE are probably involved in the second step, the conversion of ubisemiquinone to ubiquinol. In Vibrio anguillarum (Listonella anguillarum), this protein is Na(+)-translocating NADH-quinone reductase subunit B.